An 87-amino-acid chain; its full sequence is Stannin (87 aa).

At 1–10 (MSIMDHSPTT) the chain is on the mitochondrial intermembrane side. Residues 11 to 31 (GVVTVIVILIAIAALGALILG) form a helical membrane-spanning segment. Topologically, residues 32–87 (CWCYLRLQRISQSEDEESIVGDGETKEPFLLVQYSAKGPCVERKAKLTPNGPEVHS) are cytoplasmic. At Ser49 the chain carries Phosphoserine.

This sequence belongs to the stannin family. In terms of assembly, monomer.

Its subcellular location is the mitochondrion outer membrane. In terms of biological role, plays a role in the toxic effects of organotins. Plays a role in endosomal maturation. The sequence is that of Stannin (SNN) from Bos taurus (Bovine).